We begin with the raw amino-acid sequence, 430 residues long: Probable transporter SCO4007 (430 aa).

The span at 1-17 shows a compositional bias: low complexity; it reads MPSSPSSTTPAPTSTPA. Positions 1–26 are disordered; the sequence is MPSSPSSTTPAPTSTPAARREPSGKG. 11 consecutive transmembrane segments (helical) span residues 34–54, 70–90, 101–121, 126–146, 159–179, 188–208, 244–264, 275–295, 315–335, 362–382, and 383–403; these read LFLPLIALCTAVTAANIYLAA, AVAWLASVAQLGYAAGLLFFA, LVAALSLVATAALLTAAASAG, AGAVLVASAATVVPQLLVPLV, VAAVIAGLFTGVVAARVLGGL, AVFVGAAVLTAVLGLATAYIL, AGMYGAWSALWTSLALLLTEG, GLFGLFGLAASVVAPLAGGLV, VPLFWLGGQVMAALCAAAVLV, TAYVVAGFAGGALASALAGPA, and FGHWGWGGVCAVAGAWLVLGW.

The protein belongs to the major facilitator superfamily.

The protein resides in the cell membrane. This chain is Probable transporter SCO4007, found in Streptomyces coelicolor (strain ATCC BAA-471 / A3(2) / M145).